We begin with the raw amino-acid sequence, 296 residues long: Thioredoxin-related transmembrane protein 2 (296 aa).

Positions 1–48 are cleaved as a signal peptide; the sequence is MAVLAPLIALVYSVPRLSRWLARPYYFLSALLSAAFLLVRKLPPVCES. Residues 49 to 102 lie on the Extracellular side of the membrane; the sequence is LPTQREDGNPCDFDWREVEILMFLSAIVMMKNRRSITVEQHVGNIFMFSKVANA. The helical transmembrane segment at 103 to 125 threads the bilayer; that stretch reads ILFFRLDIRMGLLYITLCIVFLM. Residues 126-296 are Cytoplasmic-facing; it reads TCKPPLYMGP…VPDEESKKDK (171 aa). Residues 132–269 form the Thioredoxin domain; sequence YMGPEYIKYF…LYQRAKKLSK (138 aa). A phosphoserine mark is found at serine 211 and serine 243. Residues 272–296 form a disordered region; that stretch reads DKIPEEQPVAAVPAAVPDEESKKDK. Low complexity predominate over residues 277–287; sequence EQPVAAVPAAV. The Di-lysine motif signature appears at 293 to 296; the sequence is KKDK.

In terms of assembly, monomer. Homodimer; disulfide-linked. Occurs in both reduced and oxidized monomeric form. Oxidative conditions increase homodimerization. Interacts with CANX. Interacts with ATP2A2.

It localises to the endoplasmic reticulum membrane. The protein resides in the mitochondrion membrane. Its function is as follows. Endoplasmic reticulum and mitochondria-associated protein that probably functions as a regulator of cellular redox state and thereby regulates protein post-translational modification, protein folding and mitochondrial activity. Indirectly regulates neuronal proliferation, migration, and organization in the developing brain. This Bos taurus (Bovine) protein is Thioredoxin-related transmembrane protein 2 (TMX2).